Consider the following 228-residue polypeptide: Dolichyl-phosphate hexose transferase HVO_1613 (228 aa).

This sequence belongs to the glycosyltransferase 2 family.

In terms of biological role, glycosyltransferase that adds a monosaccharide to dolichol phosphate, thereby being responsible for generating one of the three monosaccharide-modified dolichol phosphates. The subunit onto which additional sugars are added is not known. In Haloferax volcanii (strain ATCC 29605 / DSM 3757 / JCM 8879 / NBRC 14742 / NCIMB 2012 / VKM B-1768 / DS2) (Halobacterium volcanii), this protein is Dolichyl-phosphate hexose transferase HVO_1613.